The sequence spans 440 residues: 5-hydroxytryptamine receptor 6 (440 aa).

The Extracellular portion of the chain corresponds to methionine 1–glycine 27. Asparagine 9 carries N-linked (GlcNAc...) asparagine glycosylation. The chain crosses the membrane as a helical span at residues tryptophan 28–cysteine 52. The Cytoplasmic segment spans residues threonine 53–asparagine 62. Residues phenylalanine 63–leucine 88 traverse the membrane as a helical segment. At tyrosine 89 to arginine 96 the chain is on the extracellular side. Residues glycine 97–leucine 122 traverse the membrane as a helical segment. A disulfide bridge links cysteine 99 with cysteine 180. Aspartate 106 contacts serotonin. Over aspartate 123–arginine 142 the chain is Cytoplasmic. A helical membrane pass occupies residues alanine 143–histidine 167. The Extracellular portion of the chain corresponds to glutamate 168–serine 185. A helical transmembrane segment spans residues leucine 186–cysteine 209. Residues arginine 210–alanine 268 are Cytoplasmic-facing. The helical transmembrane segment at serine 269–valine 295 threads the bilayer. Residues cysteine 296–proline 301 lie on the Extracellular side of the membrane. A helical membrane pass occupies residues glycine 302–phenylalanine 325. The Cytoplasmic segment spans residues methionine 326–asparagine 440.

This sequence belongs to the G-protein coupled receptor 1 family. As to quaternary structure, interacts with CDK5. Interacts with MTOR. Interacts with RPTOR and NF1.

The protein resides in the cell membrane. Functionally, G-protein coupled receptor for 5-hydroxytryptamine (serotonin), a biogenic hormone that functions as a neurotransmitter, a hormone and a mitogen. Also has a high affinity for tricyclic psychotropic drugs. Ligand binding causes a conformation change that triggers signaling via guanine nucleotide-binding proteins (G proteins) and modulates the activity of downstream effectors. HTR6 is coupled to G(s) G alpha proteins and mediates activation of adenylate cyclase activity. Controls pyramidal neurons migration during corticogenesis, through the regulation of CDK5 activity. Is an activator of mTOR signaling. The protein is 5-hydroxytryptamine receptor 6 of Mus musculus (Mouse).